Consider the following 203-residue polypeptide: MPSKNGPLRVGIGGPVGSGKTALTDKLCKAMREKYSVAVVTNDIYTKEDAEALVRMQALPSERIVGVETGGCPHTAIREDASINLQAIADLNRRIPDLDVVFIESGGDNLAATFSPDLADLTIYVISVCQGEEIPRKGGPGITKSDLLVINKKDLAPYVGADLEVMEHDATRMRAEKPFVFSDMKRGEGIERIVEFLTVQGGL.

Position 14-21 (G14–T21) interacts with GTP.

It belongs to the SIMIBI class G3E GTPase family. UreG subfamily. As to quaternary structure, homodimer. UreD, UreF and UreG form a complex that acts as a GTP-hydrolysis-dependent molecular chaperone, activating the urease apoprotein by helping to assemble the nickel containing metallocenter of UreC. The UreE protein probably delivers the nickel.

Its subcellular location is the cytoplasm. Its function is as follows. Facilitates the functional incorporation of the urease nickel metallocenter. This process requires GTP hydrolysis, probably effectuated by UreG. In Sinorhizobium fredii (strain NBRC 101917 / NGR234), this protein is Urease accessory protein UreG.